The following is a 101-amino-acid chain: Urease subunit beta (101 aa).

It belongs to the urease beta subunit family. Heterotrimer of UreA (gamma), UreB (beta) and UreC (alpha) subunits. Three heterotrimers associate to form the active enzyme.

The protein resides in the cytoplasm. The catalysed reaction is urea + 2 H2O + H(+) = hydrogencarbonate + 2 NH4(+). It participates in nitrogen metabolism; urea degradation; CO(2) and NH(3) from urea (urease route): step 1/1. This chain is Urease subunit beta, found in Albidiferax ferrireducens (strain ATCC BAA-621 / DSM 15236 / T118) (Rhodoferax ferrireducens).